A 200-amino-acid chain; its full sequence is Dual-action ribosomal maturation protein DarP (200 aa).

2 disordered regions span residues 1–25 and 177–200; these read MTRK…DRPS and TASG…DDEA. Over residues 12–25 the composition is skewed to basic and acidic residues; that stretch reads HAAEVDDNGYDRPS. The segment covering 184 to 200 has biased composition (acidic residues); it reads GDDEAADEAGDDHDDEA.

It belongs to the DarP family.

The protein resides in the cytoplasm. In terms of biological role, member of a network of 50S ribosomal subunit biogenesis factors which assembles along the 30S-50S interface, preventing incorrect 23S rRNA structures from forming. Promotes peptidyl transferase center (PTC) maturation. In Burkholderia ambifaria (strain MC40-6), this protein is Dual-action ribosomal maturation protein DarP.